We begin with the raw amino-acid sequence, 562 residues long: Lamassu protein LmuB (562 aa).

Functionally, component of antiviral defense system Lamassu type I, composed of LmuA and LmuB. Expression of Lamassu type I in B.subtilis (strain BEST7003) confers resistance to phages phi3T, SpBeta and SPR. May be an ATPase. This chain is Lamassu protein LmuB, found in Bacillus sp. (strain NCIM 5461 / CCTCC AB 2011126 / NIO-1130).